The sequence spans 202 residues: Small ribosomal subunit protein uS4c (202 aa).

Positions 90–151 (MRLDNTIFRL…KQKSRFIITK (62 aa)) constitute an S4 RNA-binding domain.

Belongs to the universal ribosomal protein uS4 family. In terms of assembly, part of the 30S ribosomal subunit. Contacts protein S5. The interaction surface between S4 and S5 is involved in control of translational fidelity.

Its subcellular location is the plastid. It localises to the chloroplast. Functionally, one of the primary rRNA binding proteins, it binds directly to 16S rRNA where it nucleates assembly of the body of the 30S subunit. Its function is as follows. With S5 and S12 plays an important role in translational accuracy. The sequence is that of Small ribosomal subunit protein uS4c (rps4) from Plagiochila adianthoides (Liverwort).